The primary structure comprises 121 residues: Large ribosomal subunit protein bL20 (121 aa).

The protein belongs to the bacterial ribosomal protein bL20 family.

Its function is as follows. Binds directly to 23S ribosomal RNA and is necessary for the in vitro assembly process of the 50S ribosomal subunit. It is not involved in the protein synthesizing functions of that subunit. This is Large ribosomal subunit protein bL20 from Persephonella marina (strain DSM 14350 / EX-H1).